Reading from the N-terminus, the 194-residue chain is MVMHFFLLFVSNILINNFILVRFLGLCPFMGISRTIDSAIGMGLATTCVIVFVSIISWLINFYILIPFHLIHLCTMTYMLIIAVSVQIFEIIVKKVSSTLYRLLGIYLPLITTNCSVLAIPLMNTKLNSNFIESVLYGFSSSLGFFLVLVIFSSIRERISESDVPMYFRGYPIALITASLLAIAFMGFDGLIKF.

The next 6 helical transmembrane spans lie at Met-1 to Val-21, Cys-48 to Phe-68, Leu-73 to Val-93, Leu-103 to Met-123, Val-135 to Ile-155, and Pro-172 to Ile-192.

The protein belongs to the NqrDE/RnfAE family. In terms of assembly, the complex is composed of six subunits: RnfA, RnfB, RnfC, RnfD, RnfE and RnfG.

It localises to the cell inner membrane. Part of a membrane-bound complex that couples electron transfer with translocation of ions across the membrane. The chain is Ion-translocating oxidoreductase complex subunit A from Buchnera aphidicola subsp. Baizongia pistaciae (strain Bp).